Reading from the N-terminus, the 181-residue chain is Translation initiation factor IF-3 (181 aa).

It belongs to the IF-3 family. Monomer.

Its subcellular location is the cytoplasm. In terms of biological role, IF-3 binds to the 30S ribosomal subunit and shifts the equilibrium between 70S ribosomes and their 50S and 30S subunits in favor of the free subunits, thus enhancing the availability of 30S subunits on which protein synthesis initiation begins. The protein is Translation initiation factor IF-3 of Mycoplasma capricolum subsp. capricolum (strain California kid / ATCC 27343 / NCTC 10154).